The chain runs to 182 residues: Keratin, ultra high-sulfur matrix protein (182 aa).

Belongs to the KRTAP type 5 family. As to expression, cuticle layers of differentiating wool follicles.

Its function is as follows. The keratin products of mammalian epidermal derivatives such as wool and hair consist of microfibrils embedded in a rigid matrix of other proteins. The matrix proteins include the high-sulfur and high-tyrosine keratins, having molecular weights of 6-20 kDa, whereas the microfibrils contain the larger, low-sulfur keratins (40-56 kDa). The chain is Keratin, ultra high-sulfur matrix protein from Ovis aries (Sheep).